A 431-amino-acid chain; its full sequence is Histidine--tRNA ligase (431 aa).

The protein belongs to the class-II aminoacyl-tRNA synthetase family. As to quaternary structure, homodimer.

It localises to the cytoplasm. The enzyme catalyses tRNA(His) + L-histidine + ATP = L-histidyl-tRNA(His) + AMP + diphosphate + H(+). This Finegoldia magna (strain ATCC 29328 / DSM 20472 / WAL 2508) (Peptostreptococcus magnus) protein is Histidine--tRNA ligase.